We begin with the raw amino-acid sequence, 377 residues long: Protein RecA (377 aa).

The span at 1–13 (MSNEGKPLQSTES) shows a compositional bias: polar residues. The tract at residues 1–20 (MSNEGKPLQSTESTKIDAKS) is disordered. ATP is bound at residue 82-89 (GPESSGKT). The disordered stretch occupies residues 346-377 (GSEVSANSMRPLASAARQASSRPKLSQVSANG). The segment covering 362–377 (RQASSRPKLSQVSANG) has biased composition (polar residues).

The protein belongs to the RecA family.

The protein localises to the cytoplasm. Its function is as follows. Can catalyze the hydrolysis of ATP in the presence of single-stranded DNA, the ATP-dependent uptake of single-stranded DNA by duplex DNA, and the ATP-dependent hybridization of homologous single-stranded DNAs. It interacts with LexA causing its activation and leading to its autocatalytic cleavage. The protein is Protein RecA of Prochlorococcus marinus (strain NATL1A).